We begin with the raw amino-acid sequence, 659 residues long: Threonine--tRNA ligase (659 aa).

In terms of domain architecture, TGS spans 1–61 (MSAVPELRIT…ADGDVVEEIR (61 aa)). A catalytic region spans residues 260 to 555 (DHRKLGVELD…LLEHYAGAFP (296 aa)). Positions 353, 404, and 532 each coordinate Zn(2+).

It belongs to the class-II aminoacyl-tRNA synthetase family. Homodimer. Requires Zn(2+) as cofactor.

The protein localises to the cytoplasm. The enzyme catalyses tRNA(Thr) + L-threonine + ATP = L-threonyl-tRNA(Thr) + AMP + diphosphate + H(+). Its function is as follows. Catalyzes the attachment of threonine to tRNA(Thr) in a two-step reaction: L-threonine is first activated by ATP to form Thr-AMP and then transferred to the acceptor end of tRNA(Thr). Also edits incorrectly charged L-seryl-tRNA(Thr). This Thermobifida fusca (strain YX) protein is Threonine--tRNA ligase.